Here is a 447-residue protein sequence, read N- to C-terminus: GTPase Der (447 aa).

EngA-type G domains lie at 3 to 167 and 180 to 353; these read PVIA…ALPE and IRLA…KSAN. Residues 9-16, 56-60, 119-122, 186-193, 233-237, and 298-301 contribute to the GTP site; these read GRPNVGKS, DTGGF, NKAE, DTAGL, and NKWD. A KH-like domain is found at 354–438; sequence RKMPTPVLTR…PLRIEMKTSS (85 aa).

It belongs to the TRAFAC class TrmE-Era-EngA-EngB-Septin-like GTPase superfamily. EngA (Der) GTPase family. Associates with the 50S ribosomal subunit.

Its function is as follows. GTPase that plays an essential role in the late steps of ribosome biogenesis. This is GTPase Der from Acidovorax ebreus (strain TPSY) (Diaphorobacter sp. (strain TPSY)).